The chain runs to 377 residues: MFGTPSSSPSFGTPSSTPAFGTSSPAFGTPSATPAFGTPSNPSFSSGGFGSSLFSSPFSSQQPQQQQQQQQQQQPSSLFQQQPSSNFGFQSPFNNTAQQQQQTPFPNAQLTTQMAPVAPIPYSLADRDVQAIIEAYKEDPTNPKYAFQHLLFSVTEPQYRVKPAAVSDIMWAEAMSKLEGMDSTERERLWPQLVQGFKDLSQRLKLQDEVLVSDRDRIKTTQSNVKMLQRHLQASTFPSIERLRQKEQSLQRRMLRVMRIIEGLEGKGFRLPLTKGEAELSEKLTAITRQVKGPGAELSRRVQSLQTISRAQANSIAAGSSLYLPGSTKIDEQSLIDMQEVLQQETEAIGRLGNVLKRDMRDMEIMVAEDTEMALDS.

Positions 1–18 (MFGTPSSSPSFGTPSSTP) are enriched in low complexity. The segment at 1 to 104 (MFGTPSSSPS…NTAQQQQQTP (104 aa)) is disordered. 7 repeat units span residues 2 to 3 (FG), 11 to 12 (FG), 20 to 21 (FG), 27 to 28 (FG), 36 to 37 (FG), 49 to 50 (FG), and 87 to 88 (FG). Residues 2-88 (FGTPSSSPSF…FQQQPSSNFG (87 aa)) are 7 X 2 AA repeats of F-G. Residues 19–32 (AFGTSSPAFGTPSA) show a composition bias toward polar residues. Low complexity predominate over residues 39 to 104 (PSNPSFSSGG…NTAQQQQQTP (66 aa)).

Belongs to the NUP54 family. In terms of assembly, part of the nuclear pore complex (NPC). The NPC has an eight-fold symmetrical structure comprising a central transport channel and two rings, the cytoplasmic and nuclear rings, to which eight filaments are attached. The cytoplasmic filaments have loose ends, while the nuclear filaments are joined in a distal ring, forming a nuclear basket. NPCs are highly dynamic in configuration and composition, and can be devided in 3 subcomplexes, the NUP62 subcomplex, the NUP107-160 subcomplex and the NUP93 subcomplex, containing approximately 30 different nucleoporin proteins.

The protein resides in the nucleus envelope. The protein localises to the nucleus. Its subcellular location is the nuclear pore complex. This Arabidopsis thaliana (Mouse-ear cress) protein is Nuclear pore complex protein NUP54.